Reading from the N-terminus, the 406-residue chain is Ubiquitin-like modifier-activating enzyme 5 (406 aa).

ATP-binding residues include G82, D103, K126, N149, and N183. Positions 225 and 228 each coordinate Zn(2+). The Glycyl thioester intermediate role is filled by C249. Residues C302 and C307 each coordinate Zn(2+). Residues E373 to D397 form a disordered region. A compositionally biased stretch (low complexity) spans S378–E393.

Belongs to the ubiquitin-activating E1 family. UBA5 subfamily.

Functionally, E1-like enzyme which activates UFM1. The protein is Ubiquitin-like modifier-activating enzyme 5 of Drosophila willistoni (Fruit fly).